Consider the following 415-residue polypeptide: Gamma-glutamyl phosphate reductase (415 aa).

Belongs to the gamma-glutamyl phosphate reductase family.

It is found in the cytoplasm. It carries out the reaction L-glutamate 5-semialdehyde + phosphate + NADP(+) = L-glutamyl 5-phosphate + NADPH + H(+). It participates in amino-acid biosynthesis; L-proline biosynthesis; L-glutamate 5-semialdehyde from L-glutamate: step 2/2. Its function is as follows. Catalyzes the NADPH-dependent reduction of L-glutamate 5-phosphate into L-glutamate 5-semialdehyde and phosphate. The product spontaneously undergoes cyclization to form 1-pyrroline-5-carboxylate. The sequence is that of Gamma-glutamyl phosphate reductase from Clostridium perfringens (strain ATCC 13124 / DSM 756 / JCM 1290 / NCIMB 6125 / NCTC 8237 / Type A).